Consider the following 937-residue polypeptide: Inactive tyrosine-protein kinase transmembrane receptor ROR1 (937 aa).

The signal sequence occupies residues 1 to 29 (MHRPRRRGTRPPLLALLAALLLAARGAAA). Residues 30–406 (QETELSVSAE…KEKNKMEILY (377 aa)) lie on the Extracellular side of the membrane. The region spanning 42–147 (PTSSWNISSE…EVVSSTGVLF (106 aa)) is the Ig-like C2-type domain. N-linked (GlcNAc...) asparagine glycans are attached at residues Asn-47 and Asn-66. Disulfide bonds link Cys-79–Cys-131, Cys-170–Cys-235, Cys-178–Cys-228, Cys-219–Cys-260, Cys-248–Cys-296, Cys-252–Cys-282, Cys-313–Cys-391, Cys-334–Cys-374, and Cys-362–Cys-386. The region spanning 165 to 299 (EEDGFCQPYR…SPEAANCIRI (135 aa)) is the FZ domain. N-linked (GlcNAc...) asparagine glycosylation is present at Asn-184. The 80-residue stretch at 312–391 (KCYNSTGVDY…KSDLCDIPAC (80 aa)) folds into the Kringle domain. The N-linked (GlcNAc...) asparagine glycan is linked to Asn-315. A helical transmembrane segment spans residues 407 to 427 (ILVPSVAIPLAIALLFFFICV). At 428-937 (CRNNQKSSSA…HTESMISAEL (510 aa)) the chain is on the cytoplasmic side. Residues 473 to 746 (VRFMEELGEC…PRFKDIHVRL (274 aa)) enclose the Protein kinase domain. ATP is bound by residues 479-487 (LGECAFGKI) and Lys-506. Tyr-645 is modified (phosphotyrosine; by autocatalysis). Residues 753-762 (SSHTSSTTPS) show a composition bias toward low complexity. 2 disordered regions span residues 753–779 (SSHTSSTTPSGGNATTQTTSLSASPVS) and 833–890 (AAHY…HMSI). The segment covering 763–779 (GGNATTQTTSLSASPVS) has biased composition (polar residues). The segment covering 854–864 (RSPSSASGSTS) has biased composition (low complexity). The span at 865–880 (TGHVTSLPSSGSNQEA) shows a compositional bias: polar residues.

It belongs to the protein kinase superfamily. Tyr protein kinase family. ROR subfamily. In terms of assembly, interacts with ERBB2 and IGFBP5. In terms of tissue distribution, expressed strongly in human heart, lung and kidney, but weakly in the CNS. Isoform Short is strongly expressed in fetal and adult CNS and in a variety of human cancers, including those originating from CNS or PNS neuroectoderm.

Its subcellular location is the membrane. The protein localises to the cell projection. It localises to the axon. Functionally, has very low kinase activity in vitro and is unlikely to function as a tyrosine kinase in vivo. Receptor for ligand WNT5A which activate downstream NFkB signaling pathway and may result in the inhibition of WNT3A-mediated signaling. In inner ear, crucial for spiral ganglion neurons to innervate auditory hair cells. Via IGFBP5 ligand, forms a complex with ERBB2 to enhance CREB oncogenic signaling. The chain is Inactive tyrosine-protein kinase transmembrane receptor ROR1 (ROR1) from Homo sapiens (Human).